The primary structure comprises 163 residues: Large ribosomal subunit protein uL10 (163 aa).

Belongs to the universal ribosomal protein uL10 family. As to quaternary structure, part of the ribosomal stalk of the 50S ribosomal subunit. The N-terminus interacts with L11 and the large rRNA to form the base of the stalk. The C-terminus forms an elongated spine to which L12 dimers bind in a sequential fashion forming a multimeric L10(L12)X complex.

Functionally, forms part of the ribosomal stalk, playing a central role in the interaction of the ribosome with GTP-bound translation factors. This chain is Large ribosomal subunit protein uL10, found in Histophilus somni (strain 2336) (Haemophilus somnus).